The primary structure comprises 321 residues: Protein ZAR1-like (321 aa).

Residues 110-214 form a disordered region; it reads RTLSSCSPWD…GDAASEPLRR (105 aa). The segment covering 145–154 has biased composition (basic and acidic residues); the sequence is LRRDGDEAES. The 3CxxC-type zinc finger occupies 222-307; sequence PKYGYFHCKD…QELCGRCKDK (86 aa).

It belongs to the ZAR1 family. As to quaternary structure, interacts with YBX2.

Its subcellular location is the cytoplasm. The protein localises to the cytoplasmic ribonucleoprotein granule. In terms of biological role, mRNA-binding protein required for maternal mRNA storage, translation and degradation during oocyte maturation. Probably promotes formation of some phase-separated membraneless compartment that stores maternal mRNAs in oocytes: acts by undergoing liquid-liquid phase separation upon binding to maternal mRNAs. Binds to the 3'-UTR of maternal mRNAs, inhibiting their translation. In Homo sapiens (Human), this protein is Protein ZAR1-like.